The primary structure comprises 196 residues: Imidazole glycerol phosphate synthase subunit HisH (196 aa).

The Glutamine amidotransferase type-1 domain occupies Lys-2–Leu-196. Catalysis depends on Cys-77, which acts as the Nucleophile. Active-site residues include His-178 and Glu-180.

In terms of assembly, heterodimer of HisH and HisF.

Its subcellular location is the cytoplasm. The catalysed reaction is 5-[(5-phospho-1-deoxy-D-ribulos-1-ylimino)methylamino]-1-(5-phospho-beta-D-ribosyl)imidazole-4-carboxamide + L-glutamine = D-erythro-1-(imidazol-4-yl)glycerol 3-phosphate + 5-amino-1-(5-phospho-beta-D-ribosyl)imidazole-4-carboxamide + L-glutamate + H(+). The enzyme catalyses L-glutamine + H2O = L-glutamate + NH4(+). The protein operates within amino-acid biosynthesis; L-histidine biosynthesis; L-histidine from 5-phospho-alpha-D-ribose 1-diphosphate: step 5/9. IGPS catalyzes the conversion of PRFAR and glutamine to IGP, AICAR and glutamate. The HisH subunit catalyzes the hydrolysis of glutamine to glutamate and ammonia as part of the synthesis of IGP and AICAR. The resulting ammonia molecule is channeled to the active site of HisF. This is Imidazole glycerol phosphate synthase subunit HisH from Bacteroides fragilis (strain ATCC 25285 / DSM 2151 / CCUG 4856 / JCM 11019 / LMG 10263 / NCTC 9343 / Onslow / VPI 2553 / EN-2).